The sequence spans 282 residues: Bifunctional protein FolD (282 aa).

Residues 162–164, Ser187, and Val228 each bind NADP(+); that span reads GRS.

The protein belongs to the tetrahydrofolate dehydrogenase/cyclohydrolase family. As to quaternary structure, homodimer.

It carries out the reaction (6R)-5,10-methylene-5,6,7,8-tetrahydrofolate + NADP(+) = (6R)-5,10-methenyltetrahydrofolate + NADPH. The enzyme catalyses (6R)-5,10-methenyltetrahydrofolate + H2O = (6R)-10-formyltetrahydrofolate + H(+). It participates in one-carbon metabolism; tetrahydrofolate interconversion. Functionally, catalyzes the oxidation of 5,10-methylenetetrahydrofolate to 5,10-methenyltetrahydrofolate and then the hydrolysis of 5,10-methenyltetrahydrofolate to 10-formyltetrahydrofolate. This is Bifunctional protein FolD from Thermus thermophilus (strain ATCC 27634 / DSM 579 / HB8).